We begin with the raw amino-acid sequence, 696 residues long: MHQDNSMRRAINQSRNGGSDSCDINNDREHDNINRNSYINNFHIENINSDKNEQSYIYCSDRAQVTDSILGNRKYTHEENINSTEMFSRTNYEYSNKNNVDIEMYNISNNNFYNGNNNGHSNDIIDYINNNNVNKDLSNTSNNADINTYIKKLTSNQSTAYCDGKGYNESANGSNFDINFRDVIKNNNNKNYKNNNHVPDDMLELGDRSFDSSFYIHNNVEEIDTERSNRLSFMSKLKMYFNYFGPGWIVAIAYLDPGNICGNLNVGLIRSDDFINVNSSVKDYTGYRLLWVLVYGHILGFIFHTLSMKLGHITGLDLAALCRKEFSSKFSYFLYICVQIAIWGAHLQAIIGVFVAINLILGIPVKIAILYTLIEAFAYSFLENKSLDLLEKVLSLLIGILVCCFMFNVFMTPINFQEVASSILYPRIPKGKLLDTMGLLGSVISAHIFYLHSNLTSKKKPVIYNDRMVKRYNKLGTIESGGSLLVSCITNCIIVLTFAEVNISGDDRKADYNLFNAYDVMKKYFGKTSMYIWSFGLLSSGNNASFMCEYASKSVFEGFLNKNVNPFFRVIFSRIILFIMLYAYVSYDKYTIDQLSNFINVVQILLLPLAIIPLYRFSIHKNVLGKFAIKGAFKYLVFVLVISIIVANFLLTLFDFLQYAPSNLYVIFIFISSIFYLLFIIYFFNMPITKTYYKDS.

The disordered stretch occupies residues 1 to 31 (MHQDNSMRRAINQSRNGGSDSCDINNDREHD). The Cytoplasmic segment spans residues 1–236 (MHQDNSMRRA…RSNRLSFMSK (236 aa)). The segment covering 11 to 24 (INQSRNGGSDSCDI) has biased composition (polar residues). The chain crosses the membrane as a helical span at residues 237–255 (LKMYFNYFGPGWIVAIAYL). Over 256-288 (DPGNICGNLNVGLIRSDDFINVNSSVKDYTGYR) the chain is Vacuolar. The N-linked (GlcNAc...) asparagine glycan is linked to Asn278. Residues 289-311 (LLWVLVYGHILGFIFHTLSMKLG) traverse the membrane as a helical segment. At 312-331 (HITGLDLAALCRKEFSSKFS) the chain is on the cytoplasmic side. Residues 332–357 (YFLYICVQIAIWGAHLQAIIGVFVAI) traverse the membrane as a helical segment. Over 358–362 (NLILG) the chain is Vacuolar. The helical transmembrane segment at 363-382 (IPVKIAILYTLIEAFAYSFL) threads the bilayer. Residues 383 to 393 (ENKSLDLLEKV) lie on the Cytoplasmic side of the membrane. A helical transmembrane segment spans residues 394 to 416 (LSLLIGILVCCFMFNVFMTPINF). Residues 417 to 435 (QEVASSILYPRIPKGKLLD) lie on the Vacuolar side of the membrane. Residues 436-455 (TMGLLGSVISAHIFYLHSNL) traverse the membrane as a helical segment. Over 456 to 475 (TSKKKPVIYNDRMVKRYNKL) the chain is Cytoplasmic. Residues 476–499 (GTIESGGSLLVSCITNCIIVLTFA) form a helical membrane-spanning segment. Residues 500-529 (EVNISGDDRKADYNLFNAYDVMKKYFGKTS) lie on the Vacuolar side of the membrane. The N-linked (GlcNAc...) asparagine glycan is linked to Asn502. The chain crosses the membrane as a helical span at residues 530–546 (MYIWSFGLLSSGNNASF). Residues 547–566 (MCEYASKSVFEGFLNKNVNP) are Cytoplasmic-facing. A helical membrane pass occupies residues 567–585 (FFRVIFSRIILFIMLYAYV). Residues 586–596 (SYDKYTIDQLS) are Vacuolar-facing. The helical transmembrane segment at 597–615 (NFINVVQILLLPLAIIPLY) threads the bilayer. At 616-634 (RFSIHKNVLGKFAIKGAFK) the chain is on the cytoplasmic side. Residues 635–657 (YLVFVLVISIIVANFLLTLFDFL) form a helical membrane-spanning segment. The Vacuolar portion of the chain corresponds to 658-662 (QYAPS). A helical membrane pass occupies residues 663-684 (NLYVIFIFISSIFYLLFIIYFF). At 685 to 696 (NMPITKTYYKDS) the chain is on the cytoplasmic side.

This sequence belongs to the NRAMP (TC 2.A.55) family.

The protein resides in the vacuole membrane. It catalyses the reaction Fe(2+)(in) = Fe(2+)(out). Its function is as follows. Iron transporter. Required for parasite development during the blood stages. Required for full pathogenicity. The chain is Divalent metal transporter 1 from Plasmodium yoelii.